The following is a 242-amino-acid chain: Zinc import ATP-binding protein ZnuC (242 aa).

In terms of domain architecture, ABC transporter spans 24-241 (INVENLSFFY…EKFLKMFSSY (218 aa)). 56 to 63 (GPNGGGKT) serves as a coordination point for ATP.

This sequence belongs to the ABC transporter superfamily. Zinc importer (TC 3.A.1.15.5) family. The complex is composed of two ATP-binding proteins (ZnuC), two transmembrane proteins (ZnuB) and a solute-binding protein (ZnuA).

Its subcellular location is the cell inner membrane. The enzyme catalyses Zn(2+)(out) + ATP(in) + H2O(in) = Zn(2+)(in) + ADP(in) + phosphate(in) + H(+)(in). In terms of biological role, part of the ABC transporter complex ZnuABC involved in zinc import. Responsible for energy coupling to the transport system. In Ehrlichia chaffeensis (strain ATCC CRL-10679 / Arkansas), this protein is Zinc import ATP-binding protein ZnuC.